The following is a 450-amino-acid chain: Cyclic GMP-AMP phosphodiesterase SMPDL3A (450 aa).

Positions 1–22 (MARLGALVCCLLAAWHCRPGLG) are cleaved as a signal peptide. Residues Asp42 and His44 each coordinate Zn(2+). Cysteines 59 and 78 form a disulfide. Asp107 lines the Zn(2+) pocket. His111 lines the ATP pocket. 2 N-linked (GlcNAc...) asparagine glycosylation sites follow: Asn124 and Asn128. Asn148 contributes to the Zn(2+) binding site. Asn148 and His149 together coordinate ATP. Residues Asn219 and Asn235 are each glycosylated (N-linked (GlcNAc...) asparagine). Residues His249, His290, and His292 each coordinate Zn(2+). Asn353 and Asn370 each carry an N-linked (GlcNAc...) asparagine glycan. 2 disulfide bridges follow: Cys417-Cys421 and Cys427-Cys440.

It belongs to the acid sphingomyelinase family. As to quaternary structure, monomer. Homodimer; homodimerizes following 2',3'-cGAMP-binding. Requires Zn(2+) as cofactor.

It localises to the secreted. The catalysed reaction is 2',3'-cGAMP + H2O = 5'-pGpA(2'-5') + H(+). It catalyses the reaction 5'-pGpA(2'-5') + H2O = 5'-GpA(2'-5') + phosphate. It carries out the reaction a ribonucleoside 5'-triphosphate + H2O = a ribonucleoside 5'-diphosphate + phosphate + H(+). The enzyme catalyses ATP + H2O = ADP + phosphate + H(+). In terms of biological role, cyclic-nucleotide phosphodiesterase that acts as a negative regulator of innate immunity by mediating degradation of 2',3'-cGAMP, thereby inhibiting the cGAS-STING signaling. Specifically linearizes 2',3'-cGAMP into 2'5'-bond pGpA and further hydrolyzes pGpA to produce GpA. Also has in vitro nucleotide phosphodiesterase activity with nucleoside triphosphates, such as ATP. Has in vitro activity with p-nitrophenyl-TMP. Has lower activity with nucleoside diphosphates, and no activity with nucleoside monophosphates. Has in vitro activity with CDP-choline, giving rise to CMP and phosphocholine. Has in vitro activity with CDP-ethanolamine. Does not have sphingomyelin phosphodiesterase activity. In Bos taurus (Bovine), this protein is Cyclic GMP-AMP phosphodiesterase SMPDL3A (SMPDL3A).